A 460-amino-acid polypeptide reads, in one-letter code: Asparagine--tRNA ligase (460 aa).

This sequence belongs to the class-II aminoacyl-tRNA synthetase family. In terms of assembly, homodimer.

The protein localises to the cytoplasm. The catalysed reaction is tRNA(Asn) + L-asparagine + ATP = L-asparaginyl-tRNA(Asn) + AMP + diphosphate + H(+). The protein is Asparagine--tRNA ligase of Picosynechococcus sp. (strain ATCC 27264 / PCC 7002 / PR-6) (Agmenellum quadruplicatum).